The following is a 331-amino-acid chain: UPF0194 membrane protein YbhG (331 aa).

Residues 1 to 19 (MKKPVVIGLAIAAIVTVIA) form the signal peptide. A coiled-coil region spans residues 107–208 (EEIAQAAAAV…LDLQDTTLIA (102 aa)).

This sequence belongs to the UPF0194 family.

It localises to the periplasm. In Salmonella arizonae (strain ATCC BAA-731 / CDC346-86 / RSK2980), this protein is UPF0194 membrane protein YbhG.